Reading from the N-terminus, the 932-residue chain is DNA mismatch repair protein MutS (932 aa).

An ATP-binding site is contributed by 620 to 627 (GPNMAGKS).

It belongs to the DNA mismatch repair MutS family.

In terms of biological role, this protein is involved in the repair of mismatches in DNA. It is possible that it carries out the mismatch recognition step. This protein has a weak ATPase activity. The polypeptide is DNA mismatch repair protein MutS (Lachnoclostridium phytofermentans (strain ATCC 700394 / DSM 18823 / ISDg) (Clostridium phytofermentans)).